Here is a 508-residue protein sequence, read N- to C-terminus: Maturase K (508 aa).

The protein belongs to the intron maturase 2 family. MatK subfamily.

The protein resides in the plastid. Its subcellular location is the chloroplast. Its function is as follows. Usually encoded in the trnK tRNA gene intron. Probably assists in splicing its own and other chloroplast group II introns. This Manilkara zapota (Sapodilla plum) protein is Maturase K.